Reading from the N-terminus, the 149-residue chain is Calmodulin-like protein 3 (149 aa).

4 EF-hand domains span residues 8–43 (EQIA…LGQN), 44–79 (PTEA…KMKD), 81–116 (DSEE…LGEK), and 117–149 (LSDE…LVSK). Ca(2+) contacts are provided by Asp21, Asp23, Asp25, Cys27, Glu32, Asp57, Asp59, Asn61, Thr63, Glu68, Asp94, Asp96, Asn98, Glu105, Asp130, Asp132, Asp134, Gln136, and Glu141.

It belongs to the calmodulin family. Interacts with MYO10, the interaction is calcium-dependent and essential for MYO10 function in filopodial extension.

In terms of biological role, may function as a specific light chain of unconventional myosin-10 (MYO10), also enhances MYO10 translation, possibly by acting as a chaperone for the emerging MYO10 heavy chain protein. May compete with calmodulin by binding, with different affinities, to cellular substrates. The polypeptide is Calmodulin-like protein 3 (Calml3) (Rattus norvegicus (Rat)).